A 147-amino-acid chain; its full sequence is MVNWTKTEKATITDIFSHLDYDDIGPKALSRCLIVYPWTQRYFSGFGNLYNAAAIIGNAKVAEHGIKVLHGLDLGLKKMDNIEAAYADLSSLHSEKLHVDPDNFKLLSDCITIVLAAKLGSAFTAETQATFQKFLGAVMSALGKQYH.

A Globin domain is found at 3–147 (NWTKTEKATI…VMSALGKQYH (145 aa)). Histidine 64 and histidine 93 together coordinate heme b.

This sequence belongs to the globin family. As to quaternary structure, heterotetramer of two alpha chains and two beta chains. As to expression, red blood cells.

Its function is as follows. Involved in oxygen transport from gills to the various peripheral tissues. The polypeptide is Hemoglobin subunit beta (hbb) (Gymnodraco acuticeps (Antarctic dragonfish)).